We begin with the raw amino-acid sequence, 367 residues long: Beta sliding clamp (367 aa).

It belongs to the beta sliding clamp family. In terms of assembly, forms a ring-shaped head-to-tail homodimer around DNA which binds and tethers DNA polymerases and other proteins to the DNA. The DNA replisome complex has a single clamp-loading complex (3 tau and 1 each of delta, delta', psi and chi subunits) which binds 3 Pol III cores (1 core on the leading strand and 2 on the lagging strand) each with a beta sliding clamp dimer. Additional proteins in the replisome are other copies of gamma, psi and chi, Ssb, DNA helicase and RNA primase.

It localises to the cytoplasm. In terms of biological role, confers DNA tethering and processivity to DNA polymerases and other proteins. Acts as a clamp, forming a ring around DNA (a reaction catalyzed by the clamp-loading complex) which diffuses in an ATP-independent manner freely and bidirectionally along dsDNA. Initially characterized for its ability to contact the catalytic subunit of DNA polymerase III (Pol III), a complex, multichain enzyme responsible for most of the replicative synthesis in bacteria; Pol III exhibits 3'-5' exonuclease proofreading activity. The beta chain is required for initiation of replication as well as for processivity of DNA replication. The chain is Beta sliding clamp (dnaN) from Pseudomonas putida (strain ATCC 47054 / DSM 6125 / CFBP 8728 / NCIMB 11950 / KT2440).